Consider the following 356-residue polypeptide: Histidinol-phosphate aminotransferase (356 aa).

N6-(pyridoxal phosphate)lysine is present on lysine 214.

Belongs to the class-II pyridoxal-phosphate-dependent aminotransferase family. Histidinol-phosphate aminotransferase subfamily. As to quaternary structure, homodimer. Pyridoxal 5'-phosphate is required as a cofactor.

It catalyses the reaction L-histidinol phosphate + 2-oxoglutarate = 3-(imidazol-4-yl)-2-oxopropyl phosphate + L-glutamate. Its pathway is amino-acid biosynthesis; L-histidine biosynthesis; L-histidine from 5-phospho-alpha-D-ribose 1-diphosphate: step 7/9. The chain is Histidinol-phosphate aminotransferase from Shigella boydii serotype 4 (strain Sb227).